The following is a 149-amino-acid chain: Oligosaccharyltransferase complex subunit ostc-B (149 aa).

At 1–32 (MESLYRIPFTVLECPNLKLKKPSWLHMPSAMT) the chain is on the cytoplasmic side. A helical transmembrane segment spans residues 33-53 (VYAMVVVSYFLITGGIIYDVI). Topologically, residues 54–83 (VEPPSVGSMTDEHGHQRPVAFLAYRVNGQY) are extracellular. The chain crosses the membrane as a helical span at residues 84 to 104 (IMEGLASSFLFTMGGLGFIIL). Residues 105-117 (DRSNAPNIPKLNR) lie on the Cytoplasmic side of the membrane. The helical transmembrane segment at 118 to 138 (FLLLFIGFVCVLLSFFMARVF) threads the bilayer. At 139 to 149 (MRMKLPGYLMG) the chain is on the extracellular side.

This sequence belongs to the OSTC family. Specific component of the STT3A-containing form of the oligosaccharyltransferase (OST) complex.

The protein localises to the membrane. The protein operates within protein modification; protein glycosylation. In terms of biological role, specific component of the STT3A-containing form of the oligosaccharyl transferase (OST) complex that catalyzes the initial transfer of a defined glycan (Glc(3)Man(9)GlcNAc(2) in eukaryotes) from the lipid carrier dolichol-pyrophosphate to an asparagine residue within an Asn-X-Ser/Thr consensus motif in nascent polypeptide chains, the first step in protein N-glycosylation. N-glycosylation occurs cotranslationally and the complex associates with the Sec61 complex at the channel-forming translocon complex that mediates protein translocation across the endoplasmic reticulum (ER). All subunits are required for a maximal enzyme activity. The chain is Oligosaccharyltransferase complex subunit ostc-B from Xenopus laevis (African clawed frog).